A 367-amino-acid polypeptide reads, in one-letter code: Cobalt-precorrin-5B C(1)-methyltransferase (367 aa).

Belongs to the CbiD family.

The enzyme catalyses Co-precorrin-5B + S-adenosyl-L-methionine = Co-precorrin-6A + S-adenosyl-L-homocysteine. It functions in the pathway cofactor biosynthesis; adenosylcobalamin biosynthesis; cob(II)yrinate a,c-diamide from sirohydrochlorin (anaerobic route): step 6/10. Its function is as follows. Catalyzes the methylation of C-1 in cobalt-precorrin-5B to form cobalt-precorrin-6A. This Leptospira interrogans serogroup Icterohaemorrhagiae serovar copenhageni (strain Fiocruz L1-130) protein is Cobalt-precorrin-5B C(1)-methyltransferase.